The primary structure comprises 297 residues: Ribosomal RNA small subunit methyltransferase A (297 aa).

The S-adenosyl-L-methionine site is built by N31, L33, G58, E79, D104, and N129.

Belongs to the class I-like SAM-binding methyltransferase superfamily. rRNA adenine N(6)-methyltransferase family. RsmA subfamily.

Its subcellular location is the cytoplasm. The catalysed reaction is adenosine(1518)/adenosine(1519) in 16S rRNA + 4 S-adenosyl-L-methionine = N(6)-dimethyladenosine(1518)/N(6)-dimethyladenosine(1519) in 16S rRNA + 4 S-adenosyl-L-homocysteine + 4 H(+). In terms of biological role, specifically dimethylates two adjacent adenosines (A1518 and A1519) in the loop of a conserved hairpin near the 3'-end of 16S rRNA in the 30S particle. May play a critical role in biogenesis of 30S subunits. In Staphylococcus aureus (strain Mu3 / ATCC 700698), this protein is Ribosomal RNA small subunit methyltransferase A.